A 306-amino-acid polypeptide reads, in one-letter code: Pantothenate kinase (306 aa).

91-98 (GSVAVGKS) contacts ATP.

It belongs to the prokaryotic pantothenate kinase family.

The protein resides in the cytoplasm. It carries out the reaction (R)-pantothenate + ATP = (R)-4'-phosphopantothenate + ADP + H(+). The protein operates within cofactor biosynthesis; coenzyme A biosynthesis; CoA from (R)-pantothenate: step 1/5. The protein is Pantothenate kinase of Streptococcus pneumoniae serotype 19F (strain G54).